We begin with the raw amino-acid sequence, 132 residues long: Large ribosomal subunit protein uL24 (132 aa).

It belongs to the universal ribosomal protein uL24 family. As to quaternary structure, part of the 50S ribosomal subunit.

Functionally, one of two assembly initiator proteins, it binds directly to the 5'-end of the 23S rRNA, where it nucleates assembly of the 50S subunit. One of the proteins that surrounds the polypeptide exit tunnel on the outside of the subunit. The chain is Large ribosomal subunit protein uL24 from Synechococcus sp. (strain JA-2-3B'a(2-13)) (Cyanobacteria bacterium Yellowstone B-Prime).